A 485-amino-acid chain; its full sequence is Glutamyl-tRNA(Gln) amidotransferase subunit A (485 aa).

Residues lysine 76 and serine 155 each act as charge relay system in the active site. The Acyl-ester intermediate role is filled by serine 179.

It belongs to the amidase family. GatA subfamily. Heterotrimer of A, B and C subunits.

It catalyses the reaction L-glutamyl-tRNA(Gln) + L-glutamine + ATP + H2O = L-glutaminyl-tRNA(Gln) + L-glutamate + ADP + phosphate + H(+). Its function is as follows. Allows the formation of correctly charged Gln-tRNA(Gln) through the transamidation of misacylated Glu-tRNA(Gln) in organisms which lack glutaminyl-tRNA synthetase. The reaction takes place in the presence of glutamine and ATP through an activated gamma-phospho-Glu-tRNA(Gln). The chain is Glutamyl-tRNA(Gln) amidotransferase subunit A from Marinobacter nauticus (strain ATCC 700491 / DSM 11845 / VT8) (Marinobacter aquaeolei).